A 252-amino-acid chain; its full sequence is Type III pantothenate kinase (252 aa).

6–13 (DMGNTRLK) contributes to the ATP binding site. Substrate contacts are provided by residues Y93 and 100 to 103 (GVDR). D102 functions as the Proton acceptor in the catalytic mechanism. T126 contributes to the ATP binding site. A substrate-binding site is contributed by T179.

Belongs to the type III pantothenate kinase family. As to quaternary structure, homodimer. NH4(+) is required as a cofactor. Requires K(+) as cofactor.

The protein localises to the cytoplasm. The catalysed reaction is (R)-pantothenate + ATP = (R)-4'-phosphopantothenate + ADP + H(+). The protein operates within cofactor biosynthesis; coenzyme A biosynthesis; CoA from (R)-pantothenate: step 1/5. Catalyzes the phosphorylation of pantothenate (Pan), the first step in CoA biosynthesis. In Cellvibrio japonicus (strain Ueda107) (Pseudomonas fluorescens subsp. cellulosa), this protein is Type III pantothenate kinase.